A 113-amino-acid polypeptide reads, in one-letter code: MTRVKRGYVARKRRNKILRANRSFRGTHSKLFRIANQQHMKALRYSYRDRACKKRDFRHLWITRINAVVRSYGLNYSRFMHQLRLGNMVLNRKVLSQLASLDPASFNRLIRAT.

It belongs to the bacterial ribosomal protein bL20 family.

The protein localises to the plastid. It localises to the chloroplast. Binds directly to 23S ribosomal RNA and is necessary for the in vitro assembly process of the 50S ribosomal subunit. It is not involved in the protein synthesizing functions of that subunit. The chain is Large ribosomal subunit protein bL20c from Nephroselmis olivacea (Green alga).